A 444-amino-acid polypeptide reads, in one-letter code: Homogentisate 1,2-dioxygenase (444 aa).

His-298 acts as the Proton acceptor in catalysis. Residues His-341 and Glu-347 each coordinate Fe cation. 2 residues coordinate homogentisate: Tyr-356 and His-377. Fe cation is bound at residue His-377.

Belongs to the homogentisate dioxygenase family. As to quaternary structure, hexamer; dimer of trimers. Fe cation is required as a cofactor.

It catalyses the reaction homogentisate + O2 = 4-maleylacetoacetate + H(+). The protein operates within amino-acid degradation; L-phenylalanine degradation; acetoacetate and fumarate from L-phenylalanine: step 4/6. Its function is as follows. Involved in the catabolism of homogentisate (2,5-dihydroxyphenylacetate or 2,5-OH-PhAc), a central intermediate in the degradation of phenylalanine and tyrosine. Catalyzes the oxidative ring cleavage of the aromatic ring of homogentisate to yield maleylacetoacetate. This is Homogentisate 1,2-dioxygenase from Burkholderia cenocepacia (strain ATCC BAA-245 / DSM 16553 / LMG 16656 / NCTC 13227 / J2315 / CF5610) (Burkholderia cepacia (strain J2315)).